Reading from the N-terminus, the 483-residue chain is PAT complex subunit CCDC47 (483 aa).

An N-terminal signal peptide occupies residues 1-20 (MKAFHTFCVVLLVFGSVSEA). The Cytoplasmic portion of the chain corresponds to 21 to 135 (KFDDFEDEED…PAHLQNSWES (115 aa)). The disordered stretch occupies residues 46–118 (MEDSVTESPQ…PDTSSSKNKD (73 aa)). Acidic residues predominate over residues 60–104 (TEDDEDETTVELEGQDENQEGDFEDADTQEGDTESEPYDDEEFEG). Residues 105–118 (YEDKPDTSSSKNKD) are compositionally biased toward basic and acidic residues. A helical membrane pass occupies residues 136 to 155 (YYLEILMVTGLLAYIMNYII). Over 156-483 (GKNKNSRLAQ…KMKQIKVKAM (328 aa)) the chain is Lumenal. N-linked (GlcNAc...) asparagine glycosylation is present at Asn-178. The interval 424–483 (QRQEAAQSRREEKKRAEKERIMNEEDPEKQRRLEEAALRREQKKLEKKQMKMKQIKVKAM) is disordered. Residues 430-472 (QSRREEKKRAEKERIMNEEDPEKQRRLEEAALRREQKKLEKKQ) are compositionally biased toward basic and acidic residues. The stretch at 450–483 (PEKQRRLEEAALRREQKKLEKKQMKMKQIKVKAM) forms a coiled coil. Basic residues predominate over residues 473–483 (MKMKQIKVKAM).

The protein belongs to the CCDC47 family. Component of the PAT complex, composed of WDR83OS/Asterix and CCDC47. The PAT complex is part of the multi-pass translocon (MPT) complex, composed of three subcomplexes, the GEL complex (composed of RAB5IF/OPTI and TMCO1), the BOS complex (composed of NCLN/Nicalin, NOMO and TMEM147) and the PAT complex (composed of WDR83OS/Asterix and CCDC47). The MPT complex associates with the SEC61 complex. Interacts with VCP, HSPA5, DERL1, DERL2 and SELENOS.

The protein resides in the endoplasmic reticulum membrane. The protein localises to the rough endoplasmic reticulum membrane. Component of the multi-pass translocon (MPT) complex that mediates insertion of multi-pass membrane proteins into the lipid bilayer of membranes. The MPT complex takes over after the SEC61 complex: following membrane insertion of the first few transmembrane segments of proteins by the SEC61 complex, the MPT complex occludes the lateral gate of the SEC61 complex to promote insertion of subsequent transmembrane regions. Within the MPT complex, the PAT subcomplex sequesters any highly polar regions in the transmembrane domains away from the non-polar membrane environment until they can be buried in the interior of the fully assembled protein. Within the PAT subcomplex, CCDC47 occludes the lateral gate of the SEC61 complex. Involved in the regulation of calcium ion homeostasis in the ER. Required for proper protein degradation via the ERAD (ER-associated degradation) pathway. Has an essential role in the maintenance of ER organization during embryogenesis. This chain is PAT complex subunit CCDC47, found in Homo sapiens (Human).